The chain runs to 430 residues: MDLDMNGGNKRVFQRLGGGSNRPTTDSNQKVCFHWRAGRCNRYPCPYLHRELPGPGSGPVAASSNKRVADESGFAGPSHRRGPGFSGTANNWGRFGGNRTVTKTEKLCKFWVDGNCPYGDKCRYLHCWSKGDSFSLLTQLDGHQKVVTGIALPSGSDKLYTASKDETVRIWDCASGQCTGVLNLGGEVGCIISEGPWLLVGMPNLVKAWNIQNNADLSLNGPVGQVYSLVVGTDLLFAGTQDGSILVWRYNSTTSCFDPAASLLGHTLAVVSLYVGANRLYSGAMDNSIKVWSLDNLQCIQTLTEHTSVVMSLICWDQFLLSCSLDNTVKIWAATEGGNLEVTYTHKEEYGVLALCGVHDAEAKPVLLCSCNDNSLHLYDLPSFTERGKILAKQEIRSIQIGPGGIFFTGDGSGQVKVWKWSTESTPILS.

Disordered stretches follow at residues 1-27 and 56-90; these read MDLD…TTDS and GSGP…GTAN. A C3H1-type 1 zinc finger spans residues 26–52; that stretch reads DSNQKVCFHWRAGRCNRYPCPYLHREL. A C3H1-type 2 zinc finger spans residues 102–129; sequence TKTEKLCKFWVDGNCPYGDKCRYLHCWS. 6 WD repeats span residues 142–183, 221–258, 265–304, 306–342, 345–389, and 391–429; these read GHQK…GVLN, GPVG…SCFD, GHTL…QTLT, HTSV…NLEV, THKE…ERGK, and LAKQ…TPIL.

The polypeptide is Zinc finger CCCH domain-containing protein 48 (ZFWD1) (Arabidopsis thaliana (Mouse-ear cress)).